The chain runs to 565 residues: Carboxylesterase 1D (565 aa).

The first 18 residues, 1–18, serve as a signal peptide directing secretion; sequence MRLYPLVWLFLAACTAWG. N-linked (GlcNAc...) asparagine glycosylation is present at N79. The cysteines at positions 87 and 116 are disulfide-linked. Catalysis depends on S221, which acts as the Acyl-ester intermediate. A disulfide bond links C273 and C284. The active-site Charge relay system is E353. N6-succinyllysine is present on K382. H466 functions as the Charge relay system in the catalytic mechanism. N-linked (GlcNAc...) asparagine glycosylation occurs at N489. Positions 562–565 match the Prevents secretion from ER motif; the sequence is HVEL.

This sequence belongs to the type-B carboxylesterase/lipase family. In terms of assembly, homotrimer. Detected in liver, lung and testis, but not in kidney (at protein level).

The protein resides in the endoplasmic reticulum lumen. The protein localises to the cytoplasm. It localises to the cytosol. It is found in the lipid droplet. Its subcellular location is the microsome. It carries out the reaction all-trans-retinyl hexadecanoate + H2O = all-trans-retinol + hexadecanoate + H(+). It catalyses the reaction a carboxylic ester + H2O = an alcohol + a carboxylate + H(+). The enzyme catalyses a long-chain fatty acyl ethyl ester + H2O = a long-chain fatty acid + ethanol + H(+). With respect to regulation, FAEE-synthesizing and PNPB-hydrolyzing activities are both inhibited by DFP. Functionally, major lipase in white adipose tissue. Involved in the metabolism of xenobiotics and of natural substrates. Hydrolyzes triacylglycerols and monoacylglycerols, with a preference for monoacylglycerols. The susceptibility of the substrate increases with decreasing acyl chain length of the fatty acid moiety. Catalyzes the synthesis of fatty acid ethyl esters. Hydrolyzes retinyl esters. The sequence is that of Carboxylesterase 1D from Rattus norvegicus (Rat).